The sequence spans 236 residues: Sugar fermentation stimulation protein homolog (236 aa).

This sequence belongs to the SfsA family.

The protein is Sugar fermentation stimulation protein homolog of Synechococcus elongatus (strain ATCC 33912 / PCC 7942 / FACHB-805) (Anacystis nidulans R2).